The following is a 352-amino-acid chain: Anthranilate phosphoribosyltransferase (352 aa).

5-phospho-alpha-D-ribose 1-diphosphate is bound by residues Gly-91, Gly-94–Asp-95, Thr-99, Asn-101–Thr-104, Lys-119–Ser-127, and Ser-131. Gly-91 lines the anthranilate pocket. Residue Ser-103 coordinates Mg(2+). Position 122 (Asn-122) interacts with anthranilate. Arg-177 serves as a coordination point for anthranilate. Residues Asp-235 and Glu-236 each contribute to the Mg(2+) site.

The protein belongs to the anthranilate phosphoribosyltransferase family. In terms of assembly, homodimer. Mg(2+) serves as cofactor.

It catalyses the reaction N-(5-phospho-beta-D-ribosyl)anthranilate + diphosphate = 5-phospho-alpha-D-ribose 1-diphosphate + anthranilate. It functions in the pathway amino-acid biosynthesis; L-tryptophan biosynthesis; L-tryptophan from chorismate: step 2/5. Its function is as follows. Catalyzes the transfer of the phosphoribosyl group of 5-phosphorylribose-1-pyrophosphate (PRPP) to anthranilate to yield N-(5'-phosphoribosyl)-anthranilate (PRA). This chain is Anthranilate phosphoribosyltransferase, found in Arthrobacter sp. (strain FB24).